Reading from the N-terminus, the 135-residue chain is MLNLRIMAPNRIVWNSDIQEIILSTNSGQIGILPNHASVLTALDIGIVKIRLNDQWSTMALMGGFAMIDNNNLTILVNDAEKASEIDYQEAQETFQKAKTNLEEAEGNKKKEIEALLVFKRAKARLEAINMASKL.

This sequence belongs to the ATPase epsilon chain family. As to quaternary structure, F-type ATPases have 2 components, CF(1) - the catalytic core - and CF(0) - the membrane proton channel. CF(1) has five subunits: alpha(3), beta(3), gamma(1), delta(1), epsilon(1). CF(0) has three main subunits: a, b and c.

It is found in the plastid. Its subcellular location is the chloroplast thylakoid membrane. Produces ATP from ADP in the presence of a proton gradient across the membrane. The sequence is that of ATP synthase epsilon chain, chloroplastic from Marchantia polymorpha (Common liverwort).